Consider the following 509-residue polypeptide: MEEIQRYLQPDRSQQHNFLYPLIFQEYIYALAHDHGLNRNRSVLLENPGYNNKFSLLIVKRLITRMYQQNNFLISTNDSNKNEFLGCNKSLYSQMISEGFAFIVEIPFSLRLISSLSSFEGKKIFKSHNLRSIHSTFPFLEDNFSHLNYVLDILIPYPVHLEILVQTLRYWVKDASSLHLLRFFLHEFWNLNSLITSKKPGYSFSKKNQRFFFFLYNSYVYECESTFVFLRNQSSRLRSTSFGALLERINFYGKMERLVEVFTKDLQVTLWLFKDPFMHYVRYQEKSILASKGTFLLMNKWKFYLVNFWQCHFSLCFHTGRIHINQLSNHSRDFMGYLSSVRLNPSMLRSQMLENSFLINNAIKKFDTLVPIIPLIGSLAKANFCTVLGHPISKPVWSDLSDSDIIDRFGRICRNLFHYYSGSSKKKTLYRIKYILRLSCARTLARKHKSTVRTFLKRSGSELLEEFLTSEEQVLSLTFPRASSSLWGVYRSRIWYLDIFCINDLANYQ.

It belongs to the intron maturase 2 family. MatK subfamily.

It is found in the plastid. It localises to the chloroplast. Its function is as follows. Usually encoded in the trnK tRNA gene intron. Probably assists in splicing its own and other chloroplast group II introns. This is Maturase K from Nicotiana paniculata.